The chain runs to 449 residues: Chromosomal replication initiator protein DnaA (449 aa).

Positions 1-72 are domain I, interacts with DnaA modulators; that stretch reads MPNLEELWAY…VEGVYEFAQL (72 aa). The interval 72–109 is domain II; the sequence is LEVDPVIMTKDELQPAPATDQRPAVEEDDQNLTFKAKT. Residues 110-326 are domain III, AAA+ region; that stretch reads HLNPKYTFDR…GALVRVQAFS (217 aa). ATP-binding residues include G154, G156, K157, and T158. A domain IV, binds dsDNA region spans residues 327–449; sequence TMKNEDITTS…ELRNILKNRG (123 aa).

It belongs to the DnaA family. As to quaternary structure, oligomerizes as a right-handed, spiral filament on DNA at oriC.

Its subcellular location is the cytoplasm. In terms of biological role, plays an essential role in the initiation and regulation of chromosomal replication. ATP-DnaA binds to the origin of replication (oriC) to initiate formation of the DNA replication initiation complex once per cell cycle. Binds the DnaA box (a 9 base pair repeat at the origin) and separates the double-stranded (ds)DNA. Forms a right-handed helical filament on oriC DNA; dsDNA binds to the exterior of the filament while single-stranded (ss)DNA is stabiized in the filament's interior. The ATP-DnaA-oriC complex binds and stabilizes one strand of the AT-rich DNA unwinding element (DUE), permitting loading of DNA polymerase. After initiation quickly degrades to an ADP-DnaA complex that is not apt for DNA replication. Binds acidic phospholipids. The chain is Chromosomal replication initiator protein DnaA from Lacticaseibacillus casei (strain BL23) (Lactobacillus casei).